The primary structure comprises 545 residues: Glucans biosynthesis protein G (545 aa).

The N-terminal stretch at Met-1–Ala-35 is a signal peptide.

It belongs to the OpgD/OpgG family.

The protein resides in the periplasm. Its pathway is glycan metabolism; osmoregulated periplasmic glucan (OPG) biosynthesis. Involved in the biosynthesis of osmoregulated periplasmic glucans (OPGs). This is Glucans biosynthesis protein G from Vibrio cholerae serotype O1 (strain ATCC 39541 / Classical Ogawa 395 / O395).